Here is a 61-residue protein sequence, read N- to C-terminus: Bacteriocin sakacin-P (61 aa).

Residues 1-18 constitute a propeptide that is removed on maturation; that stretch reads MEKFIELSLKEVTAITGG. The cysteines at positions 27 and 32 are disulfide-linked.

It belongs to the bacteriocin class IIA/YGNGV family.

The protein localises to the secreted. Functionally, bactericidal activity; inhibits closely related Lactobacilli, Listeria monocytogenes and ivanovvi, Enterococcus faecalis, Carnobacterium sp and Brocothrix thermosphacta. The chain is Bacteriocin sakacin-P (sakP) from Latilactobacillus sakei (Lactobacillus sakei).